We begin with the raw amino-acid sequence, 250 residues long: Protein BTG4 (250 aa).

Belongs to the BTG family. In terms of assembly, interacts with CNOT7 and EIF4E. Interacts with CNOT8. As to expression, expressed in oocytes. Expressed in testis and in olfactory epithelium.

In terms of biological role, adapter protein that bridges CNOT7, a catalytic subunit of the CCR4-NOT complex, to EIF4E, and facilitates maternal mRNAs decay during the maturation of oocytes and in the fertilized egg. It is therefore required for the maternal-zygotic transition (MZT), zygotic cleavage and initiation of embryonic development. The polypeptide is Protein BTG4 (Btg4) (Mus musculus (Mouse)).